The primary structure comprises 196 residues: Cilia- and flagella-associated protein 107 (196 aa).

Mn stretches follow at residues 47 to 62 (TPQCIYRKEYVPMPDH) and 97 to 109 (ISTYDDHYNRHNY).

Microtubule inner protein component of sperm flagellar doublet microtubules.

It localises to the cytoplasm. It is found in the cytoskeleton. The protein resides in the cilium axoneme. The protein localises to the flagellum axoneme. In terms of biological role, microtubule inner protein (MIP) part of the dynein-decorated doublet microtubules (DMTs) in cilia axoneme, which is required for motile cilia beating. The protein is Cilia- and flagella-associated protein 107 of Mus musculus (Mouse).